Here is an 80-residue protein sequence, read N- to C-terminus: Large ribosomal subunit protein bL31B (80 aa).

It belongs to the bacterial ribosomal protein bL31 family. Type B subfamily. Part of the 50S ribosomal subunit.

This chain is Large ribosomal subunit protein bL31B, found in Streptococcus mutans serotype c (strain ATCC 700610 / UA159).